Reading from the N-terminus, the 539-residue chain is ATP synthase subunit beta (539 aa).

Positions 1–44 (MAKTPAEKPATAAKKPAAPKAAAAPKAAAAKAPAAAKAPAAKKP) are disordered. Position 212-219 (212-219 (GGAGVGKT)) interacts with ATP.

The protein belongs to the ATPase alpha/beta chains family. In terms of assembly, F-type ATPases have 2 components, CF(1) - the catalytic core - and CF(0) - the membrane proton channel. CF(1) has five subunits: alpha(3), beta(3), gamma(1), delta(1), epsilon(1). CF(0) has three main subunits: a(1), b(2) and c(9-12). The alpha and beta chains form an alternating ring which encloses part of the gamma chain. CF(1) is attached to CF(0) by a central stalk formed by the gamma and epsilon chains, while a peripheral stalk is formed by the delta and b chains.

It is found in the cell inner membrane. The enzyme catalyses ATP + H2O + 4 H(+)(in) = ADP + phosphate + 5 H(+)(out). Produces ATP from ADP in the presence of a proton gradient across the membrane. The catalytic sites are hosted primarily by the beta subunits. The sequence is that of ATP synthase subunit beta from Caulobacter vibrioides (strain ATCC 19089 / CIP 103742 / CB 15) (Caulobacter crescentus).